Here is a 465-residue protein sequence, read N- to C-terminus: MRRAAGMEDYSAEEEESWYDHQDLEQDLHLAAELGKTLLERNKELEESLQQMYSTNEEQVHEIEYLTKQLDTLRLVNEQHAKVYEQLDLTARDLELTNQRLVMESKAAQQKIHGLTETIERLQSQVEELQAQVEQLRGLEQLRIRREKRERRRTIHTFPCLKELCTSSRCEDAFRLHSSSLELGPRPLEQENERLQTLVGVLRSQVSQERQRKERAEREYTVVLQEYTELERQLCEMEGCRLRVQELEAELLELQQMKQAKTYLLAREEHLAEALLAPLTQAPEADDPQPGSGDDSNAQDGVSSPAASPSHAVRKSCSDTALNAIVAKDPASRHAGNLTLHANSVRRRGMSILREVDEQYHALLEKYEELLSKCRQHGAGVRHAGVQTSRPISRDSSWRDLLGGEESPGEGKAGEKSLSQHVEAVDKRLEQSQPEYKALFKEIFARIQKTKADINATKVKTHSSK.

Coiled-coil stretches lie at residues 31-64 (AAEL…HEIE), 91-142 (ARDL…LEQL), and 188-266 (LEQE…YLLA). The tract at residues 282-315 (APEADDPQPGSGDDSNAQDGVSSPAASPSHAVRK) is disordered. Residues Ser308, Ser318, and Ser344 each carry the phosphoserine modification. A coiled-coil region spans residues 350 to 377 (MSILREVDEQYHALLEKYEELLSKCRQH). The tract at residues 382–421 (RHAGVQTSRPISRDSSWRDLLGGEESPGEGKAGEKSLSQH) is disordered. Ser407 is modified (phosphoserine).

The protein belongs to the CDR2 family.

This Mus musculus (Mouse) protein is Cerebellar degeneration-related protein 2-like (Cdr2l).